We begin with the raw amino-acid sequence, 116 residues long: Ribonuclease P protein component (116 aa).

It belongs to the RnpA family. As to quaternary structure, consists of a catalytic RNA component (M1 or rnpB) and a protein subunit.

It catalyses the reaction Endonucleolytic cleavage of RNA, removing 5'-extranucleotides from tRNA precursor.. In terms of biological role, RNaseP catalyzes the removal of the 5'-leader sequence from pre-tRNA to produce the mature 5'-terminus. It can also cleave other RNA substrates such as 4.5S RNA. The protein component plays an auxiliary but essential role in vivo by binding to the 5'-leader sequence and broadening the substrate specificity of the ribozyme. This Gluconacetobacter diazotrophicus (strain ATCC 49037 / DSM 5601 / CCUG 37298 / CIP 103539 / LMG 7603 / PAl5) protein is Ribonuclease P protein component.